The primary structure comprises 89 residues: uncharacterized protein (89 aa).

This is an uncharacterized protein from Klebsiella aerogenes (Enterobacter aerogenes).